Here is a 281-residue protein sequence, read N- to C-terminus: Nicotinamide/nicotinic acid mononucleotide adenylyltransferase 1 (281 aa).

Beta-nicotinamide D-ribonucleotide is bound by residues G15 and S16. 4 residues coordinate NAD(+): G15, S16, F17, and M23. Position 15 to 17 (15 to 17 (GSF)) interacts with ATP. Residue H24 participates in ATP binding. Positions 55 and 57 each coordinate beta-nicotinamide D-ribonucleotide. An NAD(+)-binding site is contributed by K57. ATP is bound at residue K58. 2 residues coordinate beta-nicotinamide D-ribonucleotide: W92 and T95. NAD(+) is bound by residues W92 and T95. Positions 113–143 (PQQNSPVLEKPGRKRKWAEQKQDISEKKSLE) are disordered. Phosphoserine is present on S117. The Nuclear localization signal motif lies at 123 to 129 (PGRKRKW). The segment covering 129–143 (WAEQKQDISEKKSLE) has biased composition (basic and acidic residues). G158, D160, L170, W171, E217, and N221 together coordinate NAD(+). 158–160 (GAD) serves as a coordination point for ATP. The beta-nicotinamide D-ribonucleotide site is built by L170 and W171. ATP is bound at residue 226 to 229 (TKIR).

Belongs to the eukaryotic NMN adenylyltransferase family. Homohexamer. Interacts with ADPRT/PARP1. It depends on Zn(2+) as a cofactor. Mg(2+) serves as cofactor.

Its subcellular location is the nucleus. It carries out the reaction beta-nicotinamide D-ribonucleotide + ATP + H(+) = diphosphate + NAD(+). The catalysed reaction is nicotinate beta-D-ribonucleotide + ATP + H(+) = deamido-NAD(+) + diphosphate. It participates in cofactor biosynthesis; NAD(+) biosynthesis; NAD(+) from nicotinamide D-ribonucleotide: step 1/1. Its pathway is cofactor biosynthesis; NAD(+) biosynthesis; deamido-NAD(+) from nicotinate D-ribonucleotide: step 1/1. With respect to regulation, activity is strongly inhibited by galotannin. Inhibited by P1-(adenosine-5')-P4-(nicotinic-acid-riboside-5')-tetraphosphate (Nap4AD). Its function is as follows. Catalyzes the formation of NAD(+) from nicotinamide mononucleotide (NMN) and ATP. Can also use the deamidated form; nicotinic acid mononucleotide (NaMN) as substrate with the same efficiency. Can use triazofurin monophosphate (TrMP) as substrate. Also catalyzes the reverse reaction, i.e. the pyrophosphorolytic cleavage of NAD(+). For the pyrophosphorolytic activity, prefers NAD(+) and NaAD as substrates and degrades NADH, nicotinic acid adenine dinucleotide phosphate (NHD) and nicotinamide guanine dinucleotide (NGD) less effectively. Involved in the synthesis of ATP in the nucleus, together with PARP1, PARG and NUDT5. Nuclear ATP generation is required for extensive chromatin remodeling events that are energy-consuming. Fails to cleave phosphorylated dinucleotides NADP(+), NADPH and NaADP(+). Also acts as a cofactor for glutamate and aspartate ADP-ribosylation by directing PARP1 catalytic activity to glutamate and aspartate residues on histones. Protects against axonal degeneration following mechanical or toxic insults. Delays axonal degeneration after axotomy. Results in a &gt;10-fold increase in intact neurites 72 hours after injury. Neural protection does not correlate with cellular NAD(+) levels but may still require enzyme activity. The sequence is that of Nicotinamide/nicotinic acid mononucleotide adenylyltransferase 1 (NMNAT1) from Bos taurus (Bovine).